We begin with the raw amino-acid sequence, 83 residues long: MKTLLLTLVVVTIVCLDLGYSLICFNQETYRPETTTTCPDGEDTCYSTFWNDHHGVKIERGCGCPRVNPPISIICCKTDKCNN.

The signal sequence occupies residues 1-21 (MKTLLLTLVVVTIVCLDLGYS). 4 disulfides stabilise this stretch: Cys-24–Cys-45, Cys-38–Cys-62, Cys-64–Cys-75, and Cys-76–Cys-81.

This sequence belongs to the three-finger toxin family. Short-chain subfamily. Type I alpha-neurotoxin sub-subfamily. As to expression, expressed by the venom gland.

The protein resides in the secreted. The protein is Weak toxin DE-1 of Ophiophagus hannah (King cobra).